An 81-amino-acid chain; its full sequence is uncharacterized protein (81 aa).

A disordered region spans residues 11–34 (GSVSSSNKVSVANGSSSSSFGSNG).

This is an uncharacterized protein from Dictyostelium discoideum (Social amoeba).